The following is a 358-amino-acid chain: NADH-quinone oxidoreductase subunit H (358 aa).

Transmembrane regions (helical) follow at residues 30 to 50 (VVIG…LIYM), 96 to 116 (FLYN…FSCL), 129 to 149 (VGVF…LLAG), 168 to 188 (IISY…LMGT), 201 to 221 (GWFI…YLIA), 265 to 285 (FIVA…LHIV), 297 to 317 (IPGF…LMWI), and 336 to 356 (YLVP…VFGL).

This sequence belongs to the complex I subunit 1 family. As to quaternary structure, NDH-1 is composed of 14 different subunits. Subunits NuoA, H, J, K, L, M, N constitute the membrane sector of the complex.

Its subcellular location is the cell inner membrane. The enzyme catalyses a quinone + NADH + 5 H(+)(in) = a quinol + NAD(+) + 4 H(+)(out). In terms of biological role, NDH-1 shuttles electrons from NADH, via FMN and iron-sulfur (Fe-S) centers, to quinones in the respiratory chain. The immediate electron acceptor for the enzyme in this species is believed to be ubiquinone. Couples the redox reaction to proton translocation (for every two electrons transferred, four hydrogen ions are translocated across the cytoplasmic membrane), and thus conserves the redox energy in a proton gradient. This subunit may bind ubiquinone. This is NADH-quinone oxidoreductase subunit H from Bacteroides fragilis (strain ATCC 25285 / DSM 2151 / CCUG 4856 / JCM 11019 / LMG 10263 / NCTC 9343 / Onslow / VPI 2553 / EN-2).